The primary structure comprises 212 residues: IVSPPVCGNELLEVGEECDCGTPENCQNECCDAATCKLKSGSQCGHGDCCEQCKFSKSGTECRESMSECDPAEHCTGQSSECPADVFHKNGQPCLDNYGYCYNGNCPIMYHQCYALWGADVYEAEDSCFESNTKGNYYGYCRKENGIKIPCAPEDVKCGRLYCKDNSPGQNNPCKMFYSNEDEHKGMVLPGTKCGDGKVCSNGHCVDVATAY.

Residues 4 to 90 (PPVCGNELLE…ECPADVFHKN (87 aa)) enclose the Disintegrin domain. Intrachain disulfides connect cysteine 7–cysteine 26, cysteine 18–cysteine 36, cysteine 62–cysteine 82, cysteine 69–cysteine 94, cysteine 101–cysteine 106, cysteine 113–cysteine 128, cysteine 151–cysteine 158, cysteine 163–cysteine 174, and cysteine 200–cysteine 205. A D/ECD-tripeptide motif is present at residues 68 to 70 (ECD).

Belongs to the venom metalloproteinase (M12B) family. P-III subfamily. P-IIIb sub-subfamily. In terms of assembly, monomer. In terms of tissue distribution, expressed by the venom gland.

Its subcellular location is the secreted. In terms of biological role, inhibits human platelet aggregation stimulated by collagen with an IC(50) of 420 nM. The chain is Disintegrin-like halysetin from Gloydius halys (Chinese water mocassin).